A 66-amino-acid chain; its full sequence is Large ribosomal subunit protein bL35 (66 aa).

A compositionally biased stretch (basic residues) spans 1–16 (MPKQKTHRASAKRFKR). Positions 1–22 (MPKQKTHRASAKRFKRTGSGGL) are disordered.

It belongs to the bacterial ribosomal protein bL35 family.

The protein is Large ribosomal subunit protein bL35 of Streptococcus suis (strain 05ZYH33).